Reading from the N-terminus, the 60-residue chain is Single-pass membrane and coiled-coil domain-containing protein 4 homolog (60 aa).

The interval 1 to 21 (MRKLRGGQTKETRKQKQERRE) is disordered. The span at 8–21 (QTKETRKQKQERRE) shows a compositional bias: basic and acidic residues. Residues 10-33 (KETRKQKQERREENLKIQQQLKTI) adopt a coiled-coil conformation. The helical transmembrane segment at 32-52 (TIVLPICGVFLMCIVVYVFLK) threads the bilayer.

This sequence belongs to the SMCO4 family.

The protein localises to the membrane. This Aedes aegypti (Yellowfever mosquito) protein is Single-pass membrane and coiled-coil domain-containing protein 4 homolog.